Here is a 205-residue protein sequence, read N- to C-terminus: MLEARDLYCERDERTLFRGLSFTVEAGEWVQVTGGNGAGKTTLLRLLTGLARPDGGEVYWQGEPLRRVRDSFHRSLLWIGHQPGIKTRLTARENLHFFHPGDGARLPEALAQAGLAGFEDVPVAQLSAGQQRRVALARLWLTRAALWVLDEPFTAIDVNGVARLTRRMAAHTAQGGMVILTTHQPLPGAADTVRRLALTGGGAGL.

Residues 2–205 (LEARDLYCER…LALTGGGAGL (204 aa)) enclose the ABC transporter domain. Position 34–41 (34–41 (GGNGAGKT)) interacts with ATP.

It belongs to the ABC transporter superfamily. CcmA exporter (TC 3.A.1.107) family. As to quaternary structure, the complex is composed of two ATP-binding proteins (CcmA) and two transmembrane proteins (CcmB).

The protein localises to the cell inner membrane. The catalysed reaction is heme b(in) + ATP + H2O = heme b(out) + ADP + phosphate + H(+). In terms of biological role, part of the ABC transporter complex CcmAB involved in the biogenesis of c-type cytochromes; once thought to export heme, this seems not to be the case, but its exact role is uncertain. Responsible for energy coupling to the transport system. The polypeptide is Cytochrome c biogenesis ATP-binding export protein CcmA 2 (Salmonella typhimurium (strain LT2 / SGSC1412 / ATCC 700720)).